An 87-amino-acid chain; its full sequence is UPF0335 protein RHECIAT_CH0003797 (87 aa).

It belongs to the UPF0335 family.

This is UPF0335 protein RHECIAT_CH0003797 from Rhizobium etli (strain CIAT 652).